Consider the following 362-residue polypeptide: Heme A synthase (362 aa).

A run of 5 helical transmembrane segments spans residues 12-32 (AVKI…LVGG), 102-122 (VIGL…HLGG), 128-148 (LWLI…MVAS), 159-179 (ERLA…VWTL), and 198-218 (AAAL…VAGL). A heme-binding site is contributed by His-262. 3 helical membrane-spanning segments follow: residues 264–286 (MLAY…ARAG), 291–311 (GAVW…FTLL), and 314–334 (VPIG…MLGV). Heme is bound at residue His-322.

This sequence belongs to the COX15/CtaA family. Type 2 subfamily. As to quaternary structure, interacts with CtaB. It depends on heme b as a cofactor.

It is found in the cell membrane. It catalyses the reaction Fe(II)-heme o + 2 A + H2O = Fe(II)-heme a + 2 AH2. It functions in the pathway porphyrin-containing compound metabolism; heme A biosynthesis; heme A from heme O: step 1/1. Catalyzes the conversion of heme O to heme A by two successive hydroxylations of the methyl group at C8. The first hydroxylation forms heme I, the second hydroxylation results in an unstable dihydroxymethyl group, which spontaneously dehydrates, resulting in the formyl group of heme A. The chain is Heme A synthase from Rhodopseudomonas palustris (strain BisA53).